Here is a 181-residue protein sequence, read N- to C-terminus: uncharacterized protein (181 aa).

Positions 35 to 175 constitute a Nudix hydrolase domain; it reads LRHRCVFVWA…ARLRAWRGAS (141 aa). Positions 72–94 match the Nudix box motif; that stretch reads GGVVGAGESYDDAALREAEEELG. Mg(2+)-binding residues include Glu-88 and Glu-92.

This sequence belongs to the Nudix hydrolase family. Requires Mg(2+) as cofactor.

This is an uncharacterized protein from Streptomyces coelicolor (strain ATCC BAA-471 / A3(2) / M145).